Here is a 487-residue protein sequence, read N- to C-terminus: Bifunctional cytokinin biosynthesis protein (487 aa).

Residues 1–266 (MESTNRFMIG…RMASDFCYAS (266 aa)) are adenylate isopentenyltransferase. The interval 267–487 (TSISFHPINE…FSRKGELEWV (221 aa)) is cytokinin riboside 5'-monophosphate phosphoribohydrolase. Residues E352, 380–381 (RK), 403–409 (GYGTLEE), and T415 contribute to the substrate site.

It in the N-terminal section; belongs to the IPP transferase family. This sequence in the C-terminal section; belongs to the LOG family.

It catalyses the reaction dimethylallyl diphosphate + AMP = N(6)-(dimethylallyl)adenosine 5'-phosphate + diphosphate. It carries out the reaction N(6)-(dimethylallyl)adenosine 5'-phosphate + H2O = N(6)-dimethylallyladenine + D-ribose 5-phosphate. The catalysed reaction is 9-ribosyl-trans-zeatin 5'-phosphate + H2O = trans-zeatin + D-ribose 5-phosphate. It participates in secondary metabolite biosynthesis. In terms of biological role, bifunctional cytokinin synthesis protein; part of the gene cluster that mediates the biosynthesis of cytokinins such as fusatin, fusatinic acids or 8-oxofusatin, known for their growth promoting and anti-senescence activities toward host plants. FCK1 is a bifunctional enzyme that performs the first steps in the biosynthesis of Fusarium cytokinins. It first condenses adenosine monophosphate (AMP) with dimethylallyl diphosphate (DMAPP) to yield isoprenyl adenosine monophosphate. It then catalyzes the removal of the phosphoribose to produce isopentenylaldehyde. The cytochrome P450 monooxygenase then converts isopentenylaldehyde to trans-zeatin. A condensation step converts trans-zeatin to fusatin which is further modified to produce fusatinic acid. The mechanism for oxidation of fusatin to fusatinic acid remains unknown. 8-oxofusatin could be produced through several pathways, via direct oxygenation of fusatin, or via the 8-oxo-pentenyladenine intermediate which itself must arise from either the prenylation of 8-oxo-AMP by FCK1 and/or oxygenation of isopentenylaldehyde. Both the FCK3 and FCK4 enzymes act downstream of the identified cytokinins to produce yet unidentified compounds. This is Bifunctional cytokinin biosynthesis protein from Fusarium pseudograminearum (strain CS3096) (Wheat and barley crown-rot fungus).